A 642-amino-acid chain; its full sequence is Conserved oligomeric Golgi complex subunit 6 (642 aa).

It belongs to the COG6 family. Component of the conserved oligomeric Golgi complex which is composed of eight different subunits and is required for normal Golgi morphology and localization.

The protein localises to the golgi apparatus membrane. Functionally, required for normal Golgi function. The sequence is that of Conserved oligomeric Golgi complex subunit 6 (cogc-6) from Caenorhabditis elegans.